Consider the following 20-residue polypeptide: Collagenolytic protease 36 kDa C (20 aa).

A Peptidase S1 domain is found at isoleucine 1–aspartate 20. Residues isoleucine 1 to aspartate 20 form a disordered region.

Belongs to the peptidase S1 family.

The catalysed reaction is Hydrolysis of proteins, with broad specificity for peptide bonds. Native collagen is cleaved about 75% of the length of the molecule from the N-terminus. Low activity on small molecule substrates of both trypsin and chymotrypsin.. Its function is as follows. This enzyme is a serine protease capable of degrading the native triple helix of collagen. The polypeptide is Collagenolytic protease 36 kDa C (Paralithodes camtschaticus (Red king crab)).